The sequence spans 1236 residues: ATP-dependent helicase/nuclease subunit A (1236 aa).

Residues 4 to 473 enclose the UvrD-like helicase ATP-binding domain; that stretch reads VKWTKEQQQA…VNLFKNFRSR (470 aa). 25–32 provides a ligand contact to ATP; it reads AAAGSGKT. The UvrD-like helicase C-terminal domain occupies 512-806; the sequence is YEDKSLVGGP…RIMSIHKSKG (295 aa).

It belongs to the helicase family. AddA subfamily. In terms of assembly, heterodimer of AddA and AddB/RexB. It depends on Mg(2+) as a cofactor.

The enzyme catalyses Couples ATP hydrolysis with the unwinding of duplex DNA by translocating in the 3'-5' direction.. It carries out the reaction ATP + H2O = ADP + phosphate + H(+). In terms of biological role, the heterodimer acts as both an ATP-dependent DNA helicase and an ATP-dependent, dual-direction single-stranded exonuclease. Recognizes the chi site generating a DNA molecule suitable for the initiation of homologous recombination. The AddA nuclease domain is required for chi fragment generation; this subunit has the helicase and 3' -&gt; 5' nuclease activities. The protein is ATP-dependent helicase/nuclease subunit A of Clostridium novyi (strain NT).